The primary structure comprises 199 residues: Large ribosomal subunit protein bL25 (199 aa).

The protein belongs to the bacterial ribosomal protein bL25 family. CTC subfamily. Part of the 50S ribosomal subunit; part of the 5S rRNA/L5/L18/L25 subcomplex. Contacts the 5S rRNA. Binds to the 5S rRNA independently of L5 and L18.

Functionally, this is one of the proteins that binds to the 5S RNA in the ribosome where it forms part of the central protuberance. This is Large ribosomal subunit protein bL25 from Chlorobaculum tepidum (strain ATCC 49652 / DSM 12025 / NBRC 103806 / TLS) (Chlorobium tepidum).